The sequence spans 416 residues: Homogentisate 1,2-dioxygenase (416 aa).

Catalysis depends on histidine 275, which acts as the Proton acceptor. Fe cation is bound by residues histidine 318 and glutamate 324. Tyrosine 333 and histidine 354 together coordinate homogentisate. Residue histidine 354 participates in Fe cation binding.

It belongs to the homogentisate dioxygenase family. In terms of assembly, hexamer; dimer of trimers. Fe cation serves as cofactor.

It catalyses the reaction homogentisate + O2 = 4-maleylacetoacetate + H(+). Its pathway is amino-acid degradation; L-phenylalanine degradation; acetoacetate and fumarate from L-phenylalanine: step 4/6. Its function is as follows. Involved in the catabolism of homogentisate (2,5-dihydroxyphenylacetate or 2,5-OH-PhAc), a central intermediate in the degradation of phenylalanine and tyrosine. Catalyzes the oxidative ring cleavage of the aromatic ring of homogentisate to yield maleylacetoacetate. The chain is Homogentisate 1,2-dioxygenase from Legionella pneumophila subsp. pneumophila (strain Philadelphia 1 / ATCC 33152 / DSM 7513).